The following is a 339-amino-acid chain: Ketol-acid reductoisomerase (NADP(+)) (339 aa).

In terms of domain architecture, KARI N-terminal Rossmann spans 1–182 (MRVYYDRDAD…GGGRAGIIET (182 aa)). NADP(+)-binding positions include 24-27 (YGSQ), R48, S51, T53, and 83-86 (DELQ). H108 is a catalytic residue. G134 serves as a coordination point for NADP(+). The region spanning 183–328 (SFKEECETDL…AKLRDMMPWI (146 aa)) is the KARI C-terminal knotted domain. Residues D191, E195, E227, and E231 each contribute to the Mg(2+) site. S252 is a substrate binding site.

Belongs to the ketol-acid reductoisomerase family. Mg(2+) serves as cofactor.

It carries out the reaction (2R)-2,3-dihydroxy-3-methylbutanoate + NADP(+) = (2S)-2-acetolactate + NADPH + H(+). The enzyme catalyses (2R,3R)-2,3-dihydroxy-3-methylpentanoate + NADP(+) = (S)-2-ethyl-2-hydroxy-3-oxobutanoate + NADPH + H(+). The protein operates within amino-acid biosynthesis; L-isoleucine biosynthesis; L-isoleucine from 2-oxobutanoate: step 2/4. Its pathway is amino-acid biosynthesis; L-valine biosynthesis; L-valine from pyruvate: step 2/4. Functionally, involved in the biosynthesis of branched-chain amino acids (BCAA). Catalyzes an alkyl-migration followed by a ketol-acid reduction of (S)-2-acetolactate (S2AL) to yield (R)-2,3-dihydroxy-isovalerate. In the isomerase reaction, S2AL is rearranged via a Mg-dependent methyl migration to produce 3-hydroxy-3-methyl-2-ketobutyrate (HMKB). In the reductase reaction, this 2-ketoacid undergoes a metal-dependent reduction by NADPH to yield (R)-2,3-dihydroxy-isovalerate. The polypeptide is Ketol-acid reductoisomerase (NADP(+)) (Rhodopseudomonas palustris (strain HaA2)).